Here is a 165-residue protein sequence, read N- to C-terminus: Methylated-DNA--protein-cysteine methyltransferase (165 aa).

Cys-126 serves as the catalytic Nucleophile; methyl group acceptor.

It belongs to the MGMT family.

The protein resides in the cytoplasm. The enzyme catalyses a 6-O-methyl-2'-deoxyguanosine in DNA + L-cysteinyl-[protein] = S-methyl-L-cysteinyl-[protein] + a 2'-deoxyguanosine in DNA. The catalysed reaction is a 4-O-methyl-thymidine in DNA + L-cysteinyl-[protein] = a thymidine in DNA + S-methyl-L-cysteinyl-[protein]. In terms of biological role, involved in the cellular defense against the biological effects of O6-methylguanine (O6-MeG) and O4-methylthymine (O4-MeT) in DNA. Repairs the methylated nucleobase in DNA by stoichiometrically transferring the methyl group to a cysteine residue in the enzyme. This is a suicide reaction: the enzyme is irreversibly inactivated. The chain is Methylated-DNA--protein-cysteine methyltransferase from Mycobacterium leprae (strain TN).